A 227-amino-acid chain; its full sequence is Ribosomal RNA large subunit methyltransferase E (227 aa).

Gly-78, Trp-80, Asp-103, Asp-119, and Asp-143 together coordinate S-adenosyl-L-methionine. Residue Lys-183 is the Proton acceptor of the active site.

This sequence belongs to the class I-like SAM-binding methyltransferase superfamily. RNA methyltransferase RlmE family.

Its subcellular location is the cytoplasm. It catalyses the reaction uridine(2552) in 23S rRNA + S-adenosyl-L-methionine = 2'-O-methyluridine(2552) in 23S rRNA + S-adenosyl-L-homocysteine + H(+). Functionally, specifically methylates the uridine in position 2552 of 23S rRNA at the 2'-O position of the ribose in the fully assembled 50S ribosomal subunit. The chain is Ribosomal RNA large subunit methyltransferase E from Rickettsia conorii (strain ATCC VR-613 / Malish 7).